Reading from the N-terminus, the 199-residue chain is Holliday junction resolvase RecU (199 aa).

Thr82, Asp84, Glu97, and Gln116 together coordinate Mg(2+).

This sequence belongs to the RecU family. Mg(2+) is required as a cofactor.

It is found in the cytoplasm. It carries out the reaction Endonucleolytic cleavage at a junction such as a reciprocal single-stranded crossover between two homologous DNA duplexes (Holliday junction).. In terms of biological role, endonuclease that resolves Holliday junction intermediates in genetic recombination. Cleaves mobile four-strand junctions by introducing symmetrical nicks in paired strands. Promotes annealing of linear ssDNA with homologous dsDNA. Required for DNA repair, homologous recombination and chromosome segregation. This Streptococcus agalactiae serotype Ia (strain ATCC 27591 / A909 / CDC SS700) protein is Holliday junction resolvase RecU.